The chain runs to 368 residues: Glutamate 5-kinase (368 aa).

Lys13 is a binding site for ATP. Ser54, Asp141, and Asn153 together coordinate substrate. Position 173 to 174 (173 to 174 (SD)) interacts with ATP. The PUA domain maps to 278–355 (RGVITVDEGA…DEIEAILGYA (78 aa)).

This sequence belongs to the glutamate 5-kinase family.

The protein localises to the cytoplasm. The enzyme catalyses L-glutamate + ATP = L-glutamyl 5-phosphate + ADP. It functions in the pathway amino-acid biosynthesis; L-proline biosynthesis; L-glutamate 5-semialdehyde from L-glutamate: step 1/2. Functionally, catalyzes the transfer of a phosphate group to glutamate to form L-glutamate 5-phosphate. The polypeptide is Glutamate 5-kinase (Ruegeria sp. (strain TM1040) (Silicibacter sp.)).